A 269-amino-acid polypeptide reads, in one-letter code: GTP cyclohydrolase FolE2 2 (269 aa).

It belongs to the GTP cyclohydrolase IV family.

It carries out the reaction GTP + H2O = 7,8-dihydroneopterin 3'-triphosphate + formate + H(+). The protein operates within cofactor biosynthesis; 7,8-dihydroneopterin triphosphate biosynthesis; 7,8-dihydroneopterin triphosphate from GTP: step 1/1. Its function is as follows. Converts GTP to 7,8-dihydroneopterin triphosphate. This chain is GTP cyclohydrolase FolE2 2, found in Burkholderia lata (strain ATCC 17760 / DSM 23089 / LMG 22485 / NCIMB 9086 / R18194 / 383).